Reading from the N-terminus, the 329-residue chain is tRNA N6-adenosine threonylcarbamoyltransferase (329 aa).

Residues histidine 107 and histidine 111 each coordinate Fe cation. Substrate contacts are provided by residues 129–133, aspartate 162, glycine 175, and asparagine 268; that span reads LVSGG. Aspartate 296 is a Fe cation binding site.

Belongs to the KAE1 / TsaD family. Fe(2+) is required as a cofactor.

It localises to the cytoplasm. The enzyme catalyses L-threonylcarbamoyladenylate + adenosine(37) in tRNA = N(6)-L-threonylcarbamoyladenosine(37) in tRNA + AMP + H(+). Its function is as follows. Required for the formation of a threonylcarbamoyl group on adenosine at position 37 (t(6)A37) in tRNAs that read codons beginning with adenine. Is involved in the transfer of the threonylcarbamoyl moiety of threonylcarbamoyl-AMP (TC-AMP) to the N6 group of A37, together with TsaE and TsaB. TsaD likely plays a direct catalytic role in this reaction. This is tRNA N6-adenosine threonylcarbamoyltransferase from Nitratiruptor sp. (strain SB155-2).